Reading from the N-terminus, the 170-residue chain is Protein ECM34 (170 aa).

N45 carries N-linked (GlcNAc...) asparagine glycosylation. 2 helical membrane passes run 51-71 (IWLL…GIGG) and 98-118 (TIVI…FKMY).

Belongs to the DUP/COS family.

Its subcellular location is the membrane. In terms of biological role, may be involved in cell wall organization and biogenesis. The protein is Protein ECM34 (ECM34) of Saccharomyces cerevisiae (strain ATCC 204508 / S288c) (Baker's yeast).